Consider the following 210-residue polypeptide: tRNA (guanine-N(7)-)-methyltransferase (210 aa).

4 residues coordinate S-adenosyl-L-methionine: Glu36, Glu61, Asp90, and Asp112. Asp112 is an active-site residue. Residues Lys116, Asp148, and 188 to 191 (TEYE) each bind substrate.

The protein belongs to the class I-like SAM-binding methyltransferase superfamily. TrmB family.

It carries out the reaction guanosine(46) in tRNA + S-adenosyl-L-methionine = N(7)-methylguanosine(46) in tRNA + S-adenosyl-L-homocysteine. Its pathway is tRNA modification; N(7)-methylguanine-tRNA biosynthesis. Its function is as follows. Catalyzes the formation of N(7)-methylguanine at position 46 (m7G46) in tRNA. The chain is tRNA (guanine-N(7)-)-methyltransferase from Mycoplasma genitalium (strain ATCC 33530 / DSM 19775 / NCTC 10195 / G37) (Mycoplasmoides genitalium).